The following is a 2448-amino-acid chain: Non-reducing polyketide synthase mapC (2448 aa).

Residues 14–226 (VLFGPQCPDI…HHEAHREGIQ (213 aa)) are N-terminal acylcarrier protein transacylase domain (SAT). The interval 330–350 (GFSNESPQPSTASLSNSVQTF) is disordered. In terms of domain architecture, Ketosynthase family 3 (KS3) spans 359–775 (ASPIAITGMA…GSNAALIVKE (417 aa)). Active-site for beta-ketoacyl synthase activity residues include C524, H659, and H698. The malonyl-CoA:ACP transacylase (MAT) domain stretch occupies residues 885–1188 (LCFGGQNGLT…HKIDLGGSSG (304 aa)). The active-site For acyl/malonyl transferase activity is the S972. The N-terminal hotdog fold stretch occupies residues 1256-1388 (GQEAGLLCQL…GTVCLHQERS (133 aa)). The PKS/mFAS DH domain maps to 1256 to 1565 (GQEAGLLCQL…FTSVSIRSLT (310 aa)). The tract at residues 1261-1564 (LLCQLSESPD…RFTSVSIRSL (304 aa)) is product template (PT) domain. H1290 acts as the Proton acceptor; for dehydratase activity in catalysis. A C-terminal hotdog fold region spans residues 1414-1565 (ASNGLKGSTV…FTSVSIRSLT (152 aa)). Residue D1471 is the Proton donor; for dehydratase activity of the active site. In terms of domain architecture, Carrier spans 1610–1684 (AKDLATVQEM…GLVEHIFPGH (75 aa)). O-(pantetheine 4'-phosphoryl)serine is present on S1644. Positions 1841–2076 (PYALEHDLLQ…GFEWVDWTNN (236 aa)) are methyltransferase (CMeT) domain. Catalysis depends on for thioesterase activity residues S2227, D2385, and H2417.

It localises to the cytoplasm. The protein localises to the cytosol. The enzyme catalyses 3 malonyl-CoA + acetyl-CoA + S-adenosyl-L-methionine + H(+) = 5-methylorsellinate + S-adenosyl-L-homocysteine + 3 CO2 + 4 CoA. It participates in secondary metabolite biosynthesis; terpenoid biosynthesis. Non-reducing polyketide synthase; part of the gene cluster that mediates the biosynthesis of mycophenolic acid (MPA), the first isolated antibiotic natural product in the world obtained from a culture of Penicillium brevicompactum in 1893. MpaC catalyzes the synthesis of 5-methylorsellinic acid (5MOA) via the condensation of 1 acetyl-CoA starter unit with 3 malonyl-CoA units and one methylation step. The first step of the pathway is the synthesis of 5-methylorsellinic acid (5MOA) by the cytosolic polyketide synthase mpaC. 5MOA is then converted to the phthalide compound 5,7-dihydroxy-4,6-dimethylphthalide (DHMP) by the endoplasmic reticulum-bound cytochrome P450 monooxygenase mpaDE. MpaDE first catalyzes hydroxylation of 5-MOA to 4,6-dihydroxy-2-(hydroxymethyl)-3-methylbenzoic acid (DHMB). MpaDE then acts as a lactone synthase that catalyzes the ring closure to convert DHMB into DHMP. The next step is the prenylation of DHMP by the Golgi apparatus-associated prenyltransferase mpaA to yield farnesyl-DHMP (FDHMP). The ER-bound oxygenase mpaB then mediates the oxidative cleavage the C19-C20 double bond in FDHMP to yield FDHMP-3C via a mycophenolic aldehyde intermediate. The O-methyltransferase mpaG catalyzes the methylation of FDHMP-3C to yield MFDHMP-3C. After the cytosolic methylation of FDHMP-3C, MFDHMP-3C enters into peroxisomes probably via free diffusion due to its low molecular weight. Upon a peroxisomal CoA ligation reaction, catalyzed by a beta-oxidation component enzyme acyl-CoA ligase ACL891, MFDHMP-3C-CoA would then be restricted to peroxisomes for the following beta-oxidation pathway steps. The peroxisomal beta-oxidation machinery than converts MFDHMP-3C-CoA into MPA_CoA, via a beta-oxidation chain-shortening process. Finally mpaH acts as a peroxisomal acyl-CoA hydrolase with high substrate specificity toward MPA-CoA to release the final product MPA. This Penicillium brevicompactum protein is Non-reducing polyketide synthase mapC.